The chain runs to 310 residues: Succinate dehydrogenase assembly factor 2, mitochondrial (310 aa).

Positions 35–48 are enriched in basic and acidic residues; sequence LKDGSDEASPEVKA. Positions 35-67 are disordered; the sequence is LKDGSDEASPEVKAHRANQANKAPNQFVPNTTS. A compositionally biased stretch (polar residues) spans 52–67; that stretch reads NQANKAPNQFVPNTTS.

The protein belongs to the SDHAF2 family. As to quaternary structure, interacts with the flavoprotein subunit within the SDH catalytic dimer.

The protein resides in the mitochondrion matrix. Its function is as follows. Plays an essential role in the assembly of succinate dehydrogenase (SDH), an enzyme complex (also referred to as respiratory complex II) that is a component of both the tricarboxylic acid (TCA) cycle and the mitochondrial electron transport chain, and which couples the oxidation of succinate to fumarate with the reduction of ubiquinone (coenzyme Q) to ubiquinol. Required for flavinylation (covalent attachment of FAD) of the flavoprotein subunit of the SDH catalytic dimer. The chain is Succinate dehydrogenase assembly factor 2, mitochondrial from Penicillium rubens (strain ATCC 28089 / DSM 1075 / NRRL 1951 / Wisconsin 54-1255) (Penicillium chrysogenum).